Here is a 598-residue protein sequence, read N- to C-terminus: MATAASTSAAAVAAASRLLVRRAPPRLLRRLPRAALAASRPSPPSSSSYGAAAVALGRQPLGHRARMGHTAAAAAAAGPALGLTKPNAVEPPQVSFAAKDVEFSEWKGDILAIAVTENDLVKGSDSKFENAVLKKLDGQLGGLLSEASAEEDFTGKAGQSVVLRLPGQGFKRVGLIGLGQNAPSTTTACKGIGESVASVAKSAQASSAAIVFASVGGIQEDFKLTAAAAIASGTVLGLHEDSRYKSESKKVHLKQVDLIGFGSGPEVDQKLKYANDLSSGVIFGKELVNSPANVLTPAVLAEEASNIASTYSDVFTATILDVEKCKELKMGSYLGVAAASANPPHFIHLCYKPPGGNAKRKLAIVGKGLTFDSGGYNIKTGPGCSIELMKFDMGGSAAVFGAAKALGQIKPPGVEVHFIVAACENMISGTGMRPGDIVTASNGKTIEVNNTDAEGRLTLADALVYACNQGVDKIIDLATLTGACVVALGPSIAGIFTPSDELAKEVAAASEISGEKFWRMPLEESYWESMKSGVADMVNTGGRQGGSITAALFLKQFVDEKVQWMHIDMAGPVWNDKKRAATGFGVSTLVEWVLKNSS.

A chloroplast-targeting transit peptide spans 1–71; that stretch reads MATAASTSAA…GHRARMGHTA (71 aa). The Mn(2+) site is built by lysine 367 and aspartate 372. Lysine 379 is an active-site residue. 3 residues coordinate Mn(2+): aspartate 392, aspartate 452, and glutamate 454. Residue arginine 456 is part of the active site.

It belongs to the peptidase M17 family. Homohexamer (dimer of homotrimers). Requires Mn(2+) as cofactor.

The protein resides in the plastid. The protein localises to the chloroplast. The enzyme catalyses Release of an N-terminal amino acid, Xaa-|-Yaa-, in which Xaa is preferably Leu, but may be other amino acids including Pro although not Arg or Lys, and Yaa may be Pro. Amino acid amides and methyl esters are also readily hydrolyzed, but rates on arylamides are exceedingly low.. It catalyses the reaction Release of N-terminal proline from a peptide.. Its function is as follows. Presumably involved in the processing and regular turnover of intracellular proteins. Catalyzes the removal of unsubstituted N-terminal amino acids from various peptides. This Oryza sativa subsp. japonica (Rice) protein is Leucine aminopeptidase 2, chloroplastic.